The primary structure comprises 166 residues: Large ribosomal subunit protein uL10 (166 aa).

This sequence belongs to the universal ribosomal protein uL10 family. As to quaternary structure, part of the ribosomal stalk of the 50S ribosomal subunit. The N-terminus interacts with L11 and the large rRNA to form the base of the stalk. The C-terminus forms an elongated spine to which L12 dimers bind in a sequential fashion forming a multimeric L10(L12)X complex.

Forms part of the ribosomal stalk, playing a central role in the interaction of the ribosome with GTP-bound translation factors. The sequence is that of Large ribosomal subunit protein uL10 from Neisseria gonorrhoeae (strain ATCC 700825 / FA 1090).